The following is a 372-amino-acid chain: Adaptive-response sensory kinase SasA (372 aa).

The 214-residue stretch at 147–360 folds into the Histidine kinase domain; the sequence is MVAHELRTPL…CFHFTVPVWQ (214 aa). Histidine 150 is modified (phosphohistidine; by autocatalysis).

Homooligomerizes. Interacts with KaiC. Participates in the KaiBC complex, whose core is composed of a KaiC homohexamer and 6 KaiB.

The enzyme catalyses ATP + protein L-histidine = ADP + protein N-phospho-L-histidine.. In terms of biological role, member of the two-component regulatory system SasA/RpaA involved in genome-wide circadian gene expression. One of several clock output pathways. Participates in the Kai clock protein complex, the main circadian regulator in cyanobacteria, via its interaction with KaiC. KaiC enhances the autophosphorylation activity of SasA, which then transfers its phosphate group to RpaA to activate it. In addition to its output function, recruits fold-shifted KaiB (KaiB(fs)) to KaiC to cooperatively form the KaiB(6):KaiC(6) complex (independent of SasA kinase activity). Required for robustness of the circadian rhythm of gene expression and is involved in clock output, also required for adaptation to light/dark cycles. The chain is Adaptive-response sensory kinase SasA from Prochlorococcus marinus (strain MIT 9301).